The chain runs to 354 residues: Erythroferrone (354 aa).

Positions 1-28 are cleaved as a signal peptide; sequence MAPARRPAGARLLLVYAGLLAAAAAGLG. Low complexity-rich tracts occupy residues 26–37 and 51–62; these read GLGSPEPGAPSR and PRGPGESRAGPA. Residues 26-123 form a disordered region; the sequence is GLGSPEPGAP…PGPPGPQGPP (98 aa). Basic and acidic residues predominate over residues 69–80; the sequence is TAERAHSVDPRD. Residues 94-107 show a composition bias toward basic residues; that stretch reads NGKKRSRGKAKKLK. Hydroxyproline occurs at positions 111, 113, 114, 116, 117, and 119. Positions 111-123 are enriched in pro residues; the sequence is PGPPGPPGPQGPP. The region spanning 199–354 is the C1q domain; the sequence is APRVEAAFLC…SHFSAVLLGV (156 aa). N-linked (GlcNAc...) asparagine glycans are attached at residues N243, N295, and N333.

It belongs to the adipolin/erythroferrone family. Homodimer; disulfide-linked. Forms trimer, hexamers and higher molecular weight oligomers. May form heteromeric complexes with C1QTNF2 and C1QTNF12 and, to a lesser extent, with C1QTNF5 and C1QTNF10. Interacts with BMP5 and BMP7; the interaction inhibits BMP-induced transcription of HAMP. Interacts with BMP6; the interaction inhibits BMP-induced transcription of HAMP. Interacts with BMP2. Interacts with heterodimers composed of BMP2 and BMP6 in vitro, the interaction inhibits the heterodimer binding to its receptor BMPR1A /ALK3 and thereby suppresses expression of HAMP. In terms of processing, N-glycosylated; required for secretion of the mature protein.

Its subcellular location is the secreted. Iron-regulatory hormone that acts as an erythroid regulator after hemorrhage: produced by erythroblasts following blood loss and mediates suppression of hepcidin (HAMP) expression in the liver, thereby promoting increased iron absorption and mobilization from stores. Promotes lipid uptake into adipocytes and hepatocytes via transcriptional up-regulation of genes involved in fatty acid uptake. Inhibits apoptosis and inflammatory response in cardiomyocytes via promotion of sphingosine-1-phosphate (S1P) and cAMP-dependent activation of AKT signaling. Inhibits autophagy induced by nutrient deficiency in hepatocytes via promoting the phosphorylation of IRS1, AKT, and MTOR, and thereby subsequent activation of the AKT-MTOR signaling pathway. Negatively regulates the differentiation of osteoblasts, potentially via sequestering BMP2, and thereby inhibits the activation of SMAD signaling. The reduction in BMP2 signaling in osteoblasts also results in an increase in expression of the osteoclastogenesis-promoting factors TNFSF11/RANKL and SOST, thereby indirectly promotes bone resorption. In Homo sapiens (Human), this protein is Erythroferrone.